A 520-amino-acid chain; its full sequence is GMP synthase [glutamine-hydrolyzing] (520 aa).

One can recognise a Glutamine amidotransferase type-1 domain in the interval 9-202 (SVLIVDFGSQ…IHNIAGIKGD (194 aa)). C86 functions as the Nucleophile in the catalytic mechanism. Residues H176 and E178 contribute to the active site. A GMPS ATP-PPase domain is found at 203-395 (WSMSAYRQKA…LGLPDSFIGR (193 aa)). 230–236 (SGGVDSS) contacts ATP.

As to quaternary structure, homodimer.

It catalyses the reaction XMP + L-glutamine + ATP + H2O = GMP + L-glutamate + AMP + diphosphate + 2 H(+). The protein operates within purine metabolism; GMP biosynthesis; GMP from XMP (L-Gln route): step 1/1. Functionally, catalyzes the synthesis of GMP from XMP. The chain is GMP synthase [glutamine-hydrolyzing] from Rhizobium johnstonii (strain DSM 114642 / LMG 32736 / 3841) (Rhizobium leguminosarum bv. viciae).